The sequence spans 414 residues: DNA primase small subunit PriS (414 aa).

Residues D98, D100, and D312 contribute to the active site.

Belongs to the eukaryotic-type primase small subunit family. As to quaternary structure, heterodimer of a small subunit (PriS) and a large subunit (PriL). Mg(2+) serves as cofactor. Mn(2+) is required as a cofactor.

Its function is as follows. Catalytic subunit of DNA primase, an RNA polymerase that catalyzes the synthesis of short RNA molecules used as primers for DNA polymerase during DNA replication. The small subunit contains the primase catalytic core and has DNA synthesis activity on its own. Binding to the large subunit stabilizes and modulates the activity, increasing the rate of DNA synthesis while decreasing the length of the DNA fragments, and conferring RNA synthesis capability. The DNA polymerase activity may enable DNA primase to also catalyze primer extension after primer synthesis. May also play a role in DNA repair. The chain is DNA primase small subunit PriS from Methanosarcina barkeri (strain Fusaro / DSM 804).